Here is a 211-residue protein sequence, read N- to C-terminus: Large ribosomal subunit protein eL13 (211 aa).

The protein belongs to the eukaryotic ribosomal protein eL13 family. In terms of assembly, component of the 60S large ribosomal subunit (LSU).

It is found in the cytoplasm. Functionally, component of the ribosome, a large ribonucleoprotein complex responsible for the synthesis of proteins in the cell. The small ribosomal subunit (SSU) binds messenger RNAs (mRNAs) and translates the encoded message by selecting cognate aminoacyl-transfer RNA (tRNA) molecules. The large subunit (LSU) contains the ribosomal catalytic site termed the peptidyl transferase center (PTC), which catalyzes the formation of peptide bonds, thereby polymerizing the amino acids delivered by tRNAs into a polypeptide chain. The nascent polypeptides leave the ribosome through a tunnel in the LSU and interact with protein factors that function in enzymatic processing, targeting, and the membrane insertion of nascent chains at the exit of the ribosomal tunnel. As part of the LSU, it is probably required for its formation and the maturation of rRNAs. This is Large ribosomal subunit protein eL13 (RPL13) from Gallus gallus (Chicken).